We begin with the raw amino-acid sequence, 165 residues long: MSIDMLIKKIASTSDCRLFEADGLPVIDEKHQLPKDISEFYEQCGGAVLYENADYPIYIVRPAEFELANPIIVGELCEEDISSEWYIVCTDGKGEYLTIDLNDQRKGKCYDSFFDRHGIVGETQVIASSFTDLIQRLLENKGKHWYWLRDDYVSLGDAYDGIEIE.

In terms of assembly, probably interacts with cognate toxin YokI but not with other non-cognate toxins. The interaction inhibits the toxic activity of YokI.

It localises to the cytoplasm. Its function is as follows. Immunity component of one of 6 LXG toxin-immunity modules in this strain. They promote kin selection, mediate competition in biofilms, and drive spatial segregation of different strains, indicating that LXG toxins may help avoid warfare between strains in biofilms. Mediates intercellular competition during biofilm formation; disruption of the operon disadvantages the bacteria, but overexpression of the cognate immunity protein restores growth in competition with wild-type. In situ neutralizes the toxic effect of cognate toxin YokI. Neutralizes the ability to inhibit growth of cognate toxin YokI upon expression in E.coli. Does not have immunity protein activity on other LXG toxins. This chain is Immunity protein YokJ (yokJ), found in Bacillus subtilis (strain 168).